Consider the following 353-residue polypeptide: Photosystem II D2 protein (353 aa).

Thr2 bears the N-acetylthreonine mark. Thr2 bears the Phosphothreonine mark. Residues 41-61 form a helical membrane-spanning segment; it reads CAYFALGGWFTGTTFVTSWYT. His118 serves as a coordination point for chlorophyll a. A helical transmembrane segment spans residues 125–141; the sequence is GFMLRQFELARSVQLRP. The pheophytin a site is built by Gln130 and Asn143. The chain crosses the membrane as a helical span at residues 153–166; sequence VFVSVFLIYPLGQS. His198 contributes to the chlorophyll a binding site. Residues 208-228 traverse the membrane as a helical segment; sequence AALLCAIHGATVENTLFEDGD. The a plastoquinone site is built by His215 and Phe262. Residue His215 participates in Fe cation binding. Residue His269 coordinates Fe cation. Residues 279 to 295 form a helical membrane-spanning segment; the sequence is GLWMSALGVVGLALNLR.

Belongs to the reaction center PufL/M/PsbA/D family. In terms of assembly, PSII is composed of 1 copy each of membrane proteins PsbA, PsbB, PsbC, PsbD, PsbE, PsbF, PsbH, PsbI, PsbJ, PsbK, PsbL, PsbM, PsbT, PsbX, PsbY, PsbZ, Psb30/Ycf12, at least 3 peripheral proteins of the oxygen-evolving complex and a large number of cofactors. It forms dimeric complexes. The D1/D2 heterodimer binds P680, chlorophylls that are the primary electron donor of PSII, and subsequent electron acceptors. It shares a non-heme iron and each subunit binds pheophytin, quinone, additional chlorophylls, carotenoids and lipids. There is also a Cl(-1) ion associated with D1 and D2, which is required for oxygen evolution. The PSII complex binds additional chlorophylls, carotenoids and specific lipids. is required as a cofactor.

It is found in the plastid. The protein resides in the chloroplast thylakoid membrane. The enzyme catalyses 2 a plastoquinone + 4 hnu + 2 H2O = 2 a plastoquinol + O2. In terms of biological role, photosystem II (PSII) is a light-driven water:plastoquinone oxidoreductase that uses light energy to abstract electrons from H(2)O, generating O(2) and a proton gradient subsequently used for ATP formation. It consists of a core antenna complex that captures photons, and an electron transfer chain that converts photonic excitation into a charge separation. The D1/D2 (PsbA/PsbD) reaction center heterodimer binds P680, the primary electron donor of PSII as well as several subsequent electron acceptors. D2 is needed for assembly of a stable PSII complex. The chain is Photosystem II D2 protein from Olimarabidopsis pumila (Dwarf rocket).